We begin with the raw amino-acid sequence, 524 residues long: Cytochrome P450 52A6 (524 aa).

A helical transmembrane segment spans residues 17-34; sequence WYTVITLAALVFLISSNI. Cys-472 is a heme binding site.

Belongs to the cytochrome P450 family. Heme serves as cofactor.

The protein resides in the membrane. Its function is as follows. Together with an NADPH cytochrome P450 the enzyme system catalyzes the terminal hydroxylation as the first step in the assimilation of alkanes and fatty acids. Preferentially hydroxylates hexadecane. The polypeptide is Cytochrome P450 52A6 (CYP52A6) (Candida tropicalis (Yeast)).